Reading from the N-terminus, the 478-residue chain is MNLSIQDELQLFSEELYHHLTPSLLDKLAKELGFVKRKRKFSGNELATICIWVSQRTASNSLVRLCSQLHAATGTLMSPEGLNKRFDGKAVEFLKYIFSVLWKSKLCETSAISSATFMYFQRIRILDATIFQVPKHLAHAYPGSGGCAQTAGIKIQLEYDLHSGQFLNFQVGPGKNNDKTFGTECLVTLRPGDLCIRDLGYFSLEDLDQMDQRGVYYISRLKLNHTVYMKNPSPKYFRNGTVKKQPQYTQVDLEYLMNTLKPGQTYEIKEAYIGKDQKLFSRVVIYRLTEKQLQERRTKQSYTESKKGITYSKKSKRLTGINIYVTNTPWGIVPMEQIHDFYSLRWQIEIIFKTWKSLFQIHQWQNIKQERLECHVYGRLIAIFLCSSTMFKMRQLLLHKRKRELSEYKAIGMIQDHLFLLFQAIQKNIQAITKIFIRLFTLLKKNGRKSHRYEKKTVFDIMGVIYEYSGFKKQQKVA.

The protein belongs to the transposase 11 family.

In terms of biological role, involved in the transposition of the insertion sequence. This Bacillus thuringiensis subsp. finitimus protein is Transposase for insertion sequence element IS231D.